The primary structure comprises 205 residues: Small ribosomal subunit protein uS4 (205 aa).

Residues Trp20–Asp47 form a disordered region. The 61-residue stretch at Cys94–Leu154 folds into the S4 RNA-binding domain.

The protein belongs to the universal ribosomal protein uS4 family. As to quaternary structure, part of the 30S ribosomal subunit. Contacts protein S5. The interaction surface between S4 and S5 is involved in control of translational fidelity.

One of the primary rRNA binding proteins, it binds directly to 16S rRNA where it nucleates assembly of the body of the 30S subunit. Its function is as follows. With S5 and S12 plays an important role in translational accuracy. The protein is Small ribosomal subunit protein uS4 of Paramagnetospirillum magneticum (strain ATCC 700264 / AMB-1) (Magnetospirillum magneticum).